Reading from the N-terminus, the 231-residue chain is Putative S-adenosylmethionine-dependent methyltransferase RcsF (231 aa).

The TsaA-like domain maps to 5-142; it reads VSPIGYIRSC…YVPYADAVAD (138 aa). Residues 22-24, 63-64, Arg-91, and 122-125 contribute to the S-adenosyl-L-methionine site; these read PRQ, HQ, and LDGT.

It belongs to the tRNA methyltransferase O family.

This Pseudomonas aeruginosa (strain ATCC 15692 / DSM 22644 / CIP 104116 / JCM 14847 / LMG 12228 / 1C / PRS 101 / PAO1) protein is Putative S-adenosylmethionine-dependent methyltransferase RcsF (rcsF).